The primary structure comprises 148 residues: Macrodomain Ter protein (148 aa).

Belongs to the MatP family. Homodimer.

Its subcellular location is the cytoplasm. In terms of biological role, required for spatial organization of the terminus region of the chromosome (Ter macrodomain) during the cell cycle. Prevents early segregation of duplicated Ter macrodomains during cell division. Binds specifically to matS, which is a 13 bp signature motif repeated within the Ter macrodomain. The polypeptide is Macrodomain Ter protein (Haemophilus influenzae (strain PittGG)).